The primary structure comprises 549 residues: Hydroxylamine reductase (549 aa).

Residues Cys-5, Cys-8, Cys-17, and Cys-23 each coordinate [4Fe-4S] cluster. His-242, Glu-266, Cys-310, Cys-402, Cys-430, Cys-455, Glu-490, and Lys-492 together coordinate hybrid [4Fe-2O-2S] cluster. Residue Cys-402 is modified to Cysteine persulfide.

It belongs to the HCP family. [4Fe-4S] cluster is required as a cofactor. The cofactor is hybrid [4Fe-2O-2S] cluster.

The protein localises to the cytoplasm. The enzyme catalyses A + NH4(+) + H2O = hydroxylamine + AH2 + H(+). Its function is as follows. Catalyzes the reduction of hydroxylamine to form NH(3) and H(2)O. In Clostridium novyi (strain NT), this protein is Hydroxylamine reductase.